We begin with the raw amino-acid sequence, 159 residues long: Succinate dehydrogenase [ubiquinone] cytochrome b small subunit, mitochondrial (159 aa).

The N-terminal 36 residues, 1 to 36, are a transit peptide targeting the mitochondrion; that stretch reads MATLWRLSVLCGARGGGALVLRTSVVRPAHVSAFLQ. At 37 to 63 the chain is on the mitochondrial matrix side; it reads DRHTPGWCGVQHIHLSPSHQASSKAAS. The helical transmembrane segment at 64-85 threads the bilayer; the sequence is LHWTGERVVSVLLLGLLPAAYL. Residues 86–90 lie on the Mitochondrial intermembrane side of the membrane; the sequence is NPCSA. Residues 91–111 traverse the membrane as a helical segment; the sequence is MDYSLAAALTLHGHWGIGQVV. Position 102 (His102) interacts with heme b. The Mitochondrial matrix portion of the chain corresponds to 112–120; it reads TDYVRGDAL. Tyr114 is a binding site for a ubiquinone. The chain crosses the membrane as a helical span at residues 121–142; it reads QKVAKAGLLALSAFTFAGLCYF. Residues 143 to 159 are Mitochondrial intermembrane-facing; the sequence is NYHDVGICKAVAMLWKL.

The protein belongs to the CybS family. As to quaternary structure, component of complex II composed of four subunits: the flavoprotein (FP) SDHA, iron-sulfur protein (IP) SDHB, and a cytochrome b560 composed of SDHC and SDHD.

It localises to the mitochondrion inner membrane. It functions in the pathway carbohydrate metabolism; tricarboxylic acid cycle. Functionally, membrane-anchoring subunit of succinate dehydrogenase (SDH) that is involved in complex II of the mitochondrial electron transport chain and is responsible for transferring electrons from succinate to ubiquinone (coenzyme Q). SDH also oxidizes malate to the non-canonical enol form of oxaloacetate, enol-oxaloacetate. Enol-oxaloacetate, which is a potent inhibitor of the succinate dehydrogenase activity, is further isomerized into keto-oxaloacetate. This Sus scrofa (Pig) protein is Succinate dehydrogenase [ubiquinone] cytochrome b small subunit, mitochondrial (SDHD).